We begin with the raw amino-acid sequence, 292 residues long: uncharacterized protein (292 aa).

The interval 62–81 is disordered; sequence ESSSDSDMGFHESQQNQKSN.

This is an uncharacterized protein from Homo sapiens (Human).